A 621-amino-acid polypeptide reads, in one-letter code: Probable bifunctional dTTP/UTP pyrophosphatase/methyltransferase protein (621 aa).

The tract at residues 11–223 (LHKRVVLASA…PPRPEDLRRS (213 aa)) is MAF-like. Ser21 carries the phosphoserine modification. Catalysis depends on Asp88, which acts as the Proton acceptor; for pyrophosphatase activity. Phosphoserine is present on Ser228. Thr234 bears the Phosphothreonine mark. Residues 235–279 (FEDLSDVEGGGSEPTQRDAGSRDEKAEAGEAGQATAEAECHRTRE) are disordered. Ser239 is subject to Phosphoserine. Positions 249–262 (TQRDAGSRDEKAEA) are enriched in basic and acidic residues. The ASMT-like stretch occupies residues 277 to 621 (TRETLPPFPT…DAILATKVAP (345 aa)). A Phosphoserine modification is found at Ser421. S-adenosyl-L-methionine-binding positions include Asp482, 508–510 (GDF), and Arg525.

The protein in the N-terminal section; belongs to the Maf family. YhdE subfamily. This sequence in the C-terminal section; belongs to the class I-like SAM-binding methyltransferase superfamily. Cation-independent O-methyltransferase family. Homodimer. A divalent metal cation serves as cofactor. As to expression, widely expressed. In adult, highly expressed in pancreas, placenta, fibroblast, thymus, prostate, testis, ovary and colon. Expressed at lower levels in spleen, small intestine and leukocytes. In fetus, expressed at high levels in the lung and kidney and at lower level in brain and liver.

The enzyme catalyses dTTP + H2O = dTMP + diphosphate + H(+). The catalysed reaction is UTP + H2O = UMP + diphosphate + H(+). It carries out the reaction CTP + H2O = CMP + diphosphate + H(+). It catalyses the reaction psi-UTP + H2O = psi-UMP + diphosphate + H(+). The enzyme catalyses 5-methyl-UTP + H2O = 5-methyl-UMP + diphosphate + H(+). The catalysed reaction is 5-methyl-CTP + H2O = 5-methyl-CMP + diphosphate + H(+). Functionally, nucleoside triphosphate pyrophosphatase that hydrolyzes dTTP and UTP. Can also hydrolyze CTP and the modified nucleotides pseudo-UTP, 5-methyl-UTP (m(5)UTP) and 5-methyl-CTP (m(5)CTP). Has weak activity with dCTP, 8-oxo-GTP and N(4)-methyl-dCTP. May have a dual role in cell division arrest and in preventing the incorporation of modified nucleotides into cellular nucleic acids. In addition, the presence of the putative catalytic domain of S-adenosyl-L-methionine binding in the C-terminal region argues for a methyltransferase activity. The chain is Probable bifunctional dTTP/UTP pyrophosphatase/methyltransferase protein (ASMTL) from Homo sapiens (Human).